Consider the following 201-residue polypeptide: Ras-related protein Rab-5A (201 aa).

GTP contacts are provided by residues 16-24 (GEAAVGKSS), 35-41 (LDYQEST), 64-68 (DTAGQ), 122-125 (NKLD), and 152-154 (SAK). Positions 38 to 46 (QESTIGAAF) match the Effector region motif. 2 S-geranylgeranyl cysteine lipidation sites follow: Cys199 and Cys200.

Belongs to the small GTPase superfamily. Rab family.

It localises to the cell membrane. It is found in the endosome membrane. Regulated by guanine nucleotide exchange factors (GEFs) which promote the exchange of bound GDP for free GTP. Required for the fusion of plasma membranes and early endosomes. The sequence is that of Ras-related protein Rab-5A (rab5A) from Dictyostelium discoideum (Social amoeba).